The chain runs to 426 residues: Serine--tRNA ligase (426 aa).

231–233 contributes to the L-serine binding site; it reads TAE. An ATP-binding site is contributed by 262 to 264; it reads RSE. E285 is an L-serine binding site. Residue 349-352 coordinates ATP; that stretch reads EISS. S385 lines the L-serine pocket.

Belongs to the class-II aminoacyl-tRNA synthetase family. Type-1 seryl-tRNA synthetase subfamily. Homodimer. The tRNA molecule binds across the dimer.

It localises to the cytoplasm. It carries out the reaction tRNA(Ser) + L-serine + ATP = L-seryl-tRNA(Ser) + AMP + diphosphate + H(+). The enzyme catalyses tRNA(Sec) + L-serine + ATP = L-seryl-tRNA(Sec) + AMP + diphosphate + H(+). Its pathway is aminoacyl-tRNA biosynthesis; selenocysteinyl-tRNA(Sec) biosynthesis; L-seryl-tRNA(Sec) from L-serine and tRNA(Sec): step 1/1. Its function is as follows. Catalyzes the attachment of serine to tRNA(Ser). Is also able to aminoacylate tRNA(Sec) with serine, to form the misacylated tRNA L-seryl-tRNA(Sec), which will be further converted into selenocysteinyl-tRNA(Sec). In Lysinibacillus sphaericus (strain C3-41), this protein is Serine--tRNA ligase.